Consider the following 404-residue polypeptide: E3 ubiquitin-protein ligase RNF128 (404 aa).

Residues 1-31 (MGALKMRCQCFPLPYLSLLALLLLNLSLTRA) form the signal peptide. One can recognise a PA domain in the interval 62–166 (DSPIERAAGL…LKGNEIVDLI (105 aa)). A helical membrane pass occupies residues 191 to 211 (IFFVSVSFFIVTAATVGYFIF). The RING-type; atypical zinc-finger motif lies at 260 to 301 (CAVCIEPYKPSDVVRILTCNHFFHKNCIDPWLLEHRTCPMCK). The disordered stretch occupies residues 336-356 (ITEEENHSETASSGYASVRGG).

In terms of processing, auto-ubiquitinated. In terms of tissue distribution, expressed in the cement gland, cranial placodes, and the pronephros.

The protein resides in the endomembrane system. It localises to the cytoplasm. The protein localises to the perinuclear region. The enzyme catalyses S-ubiquitinyl-[E2 ubiquitin-conjugating enzyme]-L-cysteine + [acceptor protein]-L-lysine = [E2 ubiquitin-conjugating enzyme]-L-cysteine + N(6)-ubiquitinyl-[acceptor protein]-L-lysine.. The protein operates within protein modification; protein ubiquitination. In terms of biological role, E3 ubiquitin-protein ligase that catalyzes polyubiquitin chains. Converts epidermis into cement gland and neural tissue in whole embryos. This Xenopus laevis (African clawed frog) protein is E3 ubiquitin-protein ligase RNF128 (rnf128).